The primary structure comprises 949 residues: MKKILDSAKNYLNTHDKLKTACLIALELPSSSGSAATYIYLTDYFRDVTYNGILYRSGKVKSISSHKQNRQLSIGSLSFTITGTAEDEVLKLVQNGVSFLDRGITIHQAIINEEGNILPVDPDTDGPLLFFRGRITGGGIKDNVNTSGIGTSVITWNCSNQFYDFDRVNGRYTDDASHRGLEVVNGTLQPSNGAKRPEYQEDYGFFHSNKSTTILAKYQVKEERYKLQSKKKLFGLSRSYSLKKYYETVTKEVDLDFNLAAKFIPVVYGVQKIPGIPIFADTELNNPNIVYVVYAFAEGEIDGFLDFYIGDSPMICFDETDSDTRTCFGRKKIVGDTMHRLAAGTSTSQPSVHGQEYKYNDGNGDIRIWTFHGKPDQTAAQVLVDIAKKKGFYLQNQNGNGPEYWDSRYKLLDTAYAIVRFTINENRTEIPEISAEVQGKKVKVYNSDGTIKADKTSLNGIWQLMDYLTSDRYGADITLDQFPLQKVISEAKILDIIDESYQTSWQPYWRYVGWNDPLSENRQIVQLNTILDTSESVFKNVQGILESFGGAINNLSGEYRITVEKYSTNPLRINFLDTYGDLDLSDTTGRNKFNSVQASLVDPALSWKTNSITFYNSKFKEQDKGLDKKLQLSFANITNYYTARSYADRELKKSRYSRTLSFSVPYKFIGIEPNDPIAFTYERYGWKDKFFLVDEVENTRDGKINLVLQEYGEDVFINSEQVDNSGNDIPDISNNVLPPRDFKYTPTPGGVVGAIGKNGELSWLPSLTNNVVYYSIAHSGHVNPYIVQQLENNPNERMIQEIIGEPAGLAIFELRAVDINGRRSSPVTLSVDLNSAKNLSVVSNFRVVNTASGDVTEFVGPDVKLAWDKIPEEEIIPEIYYTLEIYDSQDRMLRSVRIEDVYTYDYLLTYNKADFALLNSGALGINRKLRFRIRAEGENGEQSVGWATI.

Homotrimer. Forms a pseudo-hexameric ring. Interacts with distal tail protein pb9 and straight fiber protein pb4. In terms of processing, ubiquitinated by the Bil antiviral defense system when this protein is expressed in E.coli MG1655 strain expressing the Bil system.

The protein localises to the virion. In terms of biological role, forms the simplified baseplate, together with the p132 collar protein, the baseplate tube protein p140 and distal tail protein pb9. Closes the tail tube and, upon infection, opens to form a channel thereby anchoring the tube to the outer membrane. These changes allow the tape measure protein pb2 to be expelled and phage DNA to be transferred to the host. Also forms the start of the central straight fiber, which is continued with the straight fiber protein pb4. This chain is Baseplate hub protein pb3, found in Escherichia coli (Enterobacteria phage T5).